The primary structure comprises 132 residues: Holo-[acyl-carrier-protein] synthase (132 aa).

Aspartate 8 and glutamate 64 together coordinate Mg(2+).

The protein belongs to the P-Pant transferase superfamily. AcpS family. It depends on Mg(2+) as a cofactor.

It localises to the cytoplasm. It carries out the reaction apo-[ACP] + CoA = holo-[ACP] + adenosine 3',5'-bisphosphate + H(+). In terms of biological role, transfers the 4'-phosphopantetheine moiety from coenzyme A to a Ser of acyl-carrier-protein. The sequence is that of Holo-[acyl-carrier-protein] synthase from Shewanella woodyi (strain ATCC 51908 / MS32).